A 224-amino-acid chain; its full sequence is Charged multivesicular body protein 4b (224 aa).

The disordered stretch occupies residues Met-1 to Gln-23. Position 2 is an N-acetylserine (Ser-2). Positions Ser-2–Val-153 are intramolecular interaction with C-terminus. Lys-6 bears the N6-acetyllysine mark. The segment covering Phe-8 to Gly-19 has biased composition (gly residues). Positions Gln-23–Ile-183 form a coiled coil. Lys-114 carries the N6-acetyllysine modification. The segment at Gly-154–Met-224 is intramolecular interaction with N-terminus. 2 positions are modified to phosphoserine: Ser-184 and Ser-223. A disordered region spans residues Gly-185–Met-224.

It belongs to the SNF7 family. As to quaternary structure, probable core component of the endosomal sorting required for transport complex III (ESCRT-III). ESCRT-III components are thought to multimerize to form a flat lattice on the perimeter membrane of the endosome. Several assembly forms of ESCRT-III may exist that interact and act sequentially. Interacts with CHMP6 and CHMP4C. Interacts with PDCD6IP; the interaction is direct. Interacts with VPS4A; the interaction is direct. Interacts with VPS4B; the interaction is direct. Interacts with CHMP7. Interacts with CFTR; the interaction requires misfolded CFTR. Interacts with PTPN23. Interacts with CC2D1B. Post-translationally, ISGylated. Isgylation weakens its interaction with VPS4A.

It is found in the cytoplasm. The protein localises to the cytosol. Its subcellular location is the late endosome membrane. It localises to the midbody. The protein resides in the nucleus envelope. Its function is as follows. Probable core component of the endosomal sorting required for transport complex III (ESCRT-III) which is involved in multivesicular bodies (MVBs) formation and sorting of endosomal cargo proteins into MVBs. MVBs contain intraluminal vesicles (ILVs) that are generated by invagination and scission from the limiting membrane of the endosome and mostly are delivered to lysosomes enabling degradation of membrane proteins, such as stimulated growth factor receptors, lysosomal enzymes and lipids. The MVB pathway appears to require the sequential function of ESCRT-O, -I,-II and -III complexes. ESCRT-III proteins mostly dissociate from the invaginating membrane before the ILV is released. The ESCRT machinery also functions in topologically equivalent membrane fission events, such as the terminal stages of cytokinesis. Together with SPAST, the ESCRT-III complex promotes nuclear envelope sealing and mitotic spindle disassembly during late anaphase. Plays a role in the endosomal sorting pathway. ESCRT-III proteins are believed to mediate the necessary vesicle extrusion and/or membrane fission activities, possibly in conjunction with the AAA ATPase VPS4. When overexpressed, membrane-assembled circular arrays of CHMP4B filaments can promote or stabilize negative curvature and outward budding. CHMP4A/B/C are required for the exosomal release of SDCBP, CD63 and syndecan. Majority of the protein exists in a folded closed conformation. The protein is Charged multivesicular body protein 4b (Chmp4b) of Mus musculus (Mouse).